A 373-amino-acid chain; its full sequence is MSKRCYYEVLEVSREAQEGEIKRAYRKKAMEFHPDRNPGNAEAEEKFKEAAEAYDVLRDPEKRSRYDRFGHQGMNGMNGGFGGFQSSEDIFGAFGDIFGDIFGFGGGGRGANRMQAGSDLRYNLTVSFRDAAKGTEVELNIPVTDTCDTCEGSGSAPGTSPETCSHCGGRGAVEQNQGFFRISVPCPACNGRGKVITDPCSECRGAGYVRKQKDLNVRIPAGVDNGSRLRLRGEGEAGMNGGPHGDLYVVITVEPDKVFKRQGQDLVLSTEITFVQAALGYKLEVPTLDEPIEMDIPKGTQSGEVFQLRGLGLPYLGSSHKGDLLVEVKVKTPTGLNSRQEELLREFEALDEEKPMKKVKKLFKKAKDKVMGE.

Residues 5–70 (CYYEVLEVSR…EKRSRYDRFG (66 aa)) form the J domain. The CR-type zinc finger occupies 134 to 212 (GTEVELNIPV…CRGAGYVRKQ (79 aa)). 8 residues coordinate Zn(2+): Cys147, Cys150, Cys164, Cys167, Cys186, Cys189, Cys200, and Cys203. 4 CXXCXGXG motif repeats span residues 147-154 (CDTCEGSG), 164-171 (CSHCGGRG), 186-193 (CPACNGRG), and 200-207 (CSECRGAG).

The protein belongs to the DnaJ family. As to quaternary structure, homodimer. Zn(2+) serves as cofactor.

The protein localises to the cytoplasm. In terms of biological role, participates actively in the response to hyperosmotic and heat shock by preventing the aggregation of stress-denatured proteins and by disaggregating proteins, also in an autonomous, DnaK-independent fashion. Unfolded proteins bind initially to DnaJ; upon interaction with the DnaJ-bound protein, DnaK hydrolyzes its bound ATP, resulting in the formation of a stable complex. GrpE releases ADP from DnaK; ATP binding to DnaK triggers the release of the substrate protein, thus completing the reaction cycle. Several rounds of ATP-dependent interactions between DnaJ, DnaK and GrpE are required for fully efficient folding. Also involved, together with DnaK and GrpE, in the DNA replication of plasmids through activation of initiation proteins. This Maridesulfovibrio salexigens (strain ATCC 14822 / DSM 2638 / NCIMB 8403 / VKM B-1763) (Desulfovibrio salexigens) protein is Chaperone protein DnaJ.